A 102-amino-acid polypeptide reads, in one-letter code: Acid shock protein (102 aa).

An N-terminal signal peptide occupies residues methionine 1–alanine 21. Residues alanine 22–lysine 41 show a composition bias toward low complexity. The propeptide occupies alanine 22–glutamine 58. Positions alanine 22–alanine 102 are disordered. Residues alanine 80–histidine 90 are compositionally biased toward basic residues. A compositionally biased stretch (low complexity) spans glutamine 91–alanine 102.

The protein belongs to the Asr family. In terms of processing, proteolytic processing gives rise to the active protein.

The protein localises to the periplasm. Its function is as follows. Required for growth and/or survival at acidic conditions. The sequence is that of Acid shock protein from Escherichia coli O45:K1 (strain S88 / ExPEC).